Here is a 240-residue protein sequence, read N- to C-terminus: Large ribosomal subunit protein uL2 (240 aa).

Polar residues predominate over residues 1–11; that stretch reads MGKRLISQNRG. Disordered stretches follow at residues 1–28 and 206–240; these read MGKRLISQNRGRGTPKYRSPTHKRKGAV and GGGRHQHLGKPSSVSRHTSPGRKVGHIASRRTGRK. Composition is skewed to basic residues over residues 13–28 and 224–240; these read GTPKYRSPTHKRKGAV and SPGRKVGHIASRRTGRK.

This sequence belongs to the universal ribosomal protein uL2 family. Part of the 50S ribosomal subunit. Forms a bridge to the 30S subunit in the 70S ribosome.

Its function is as follows. One of the primary rRNA binding proteins. Required for association of the 30S and 50S subunits to form the 70S ribosome, for tRNA binding and peptide bond formation. It has been suggested to have peptidyltransferase activity; this is somewhat controversial. Makes several contacts with the 16S rRNA in the 70S ribosome. The protein is Large ribosomal subunit protein uL2 of Methanococcus maripaludis (strain C7 / ATCC BAA-1331).